The chain runs to 761 residues: Xaa-Pro dipeptidyl-peptidase (761 aa).

Residues S349, D469, and H499 each act as charge relay system in the active site.

Belongs to the peptidase S15 family. Homodimer.

The protein resides in the cytoplasm. It catalyses the reaction Hydrolyzes Xaa-Pro-|- bonds to release unblocked, N-terminal dipeptides from substrates including Ala-Pro-|-p-nitroanilide and (sequentially) Tyr-Pro-|-Phe-Pro-|-Gly-Pro-|-Ile.. In terms of biological role, removes N-terminal dipeptides sequentially from polypeptides having unsubstituted N-termini provided that the penultimate residue is proline. The sequence is that of Xaa-Pro dipeptidyl-peptidase from Streptococcus equi subsp. zooepidemicus (strain H70).